Here is a 192-residue protein sequence, read N- to C-terminus: Probable cobalt-precorrin-6B C(15)-methyltransferase (decarboxylating) (192 aa).

Residues Thr-20, 44–48 (GSGTG), Glu-68, and Ala-96 each bind S-adenosyl-L-methionine.

Belongs to the methyltransferase superfamily. Archaeal-type CbiT family.

The enzyme catalyses Co-precorrin-6B + S-adenosyl-L-methionine = Co-precorrin-7 + S-adenosyl-L-homocysteine + CO2. The protein operates within cofactor biosynthesis; adenosylcobalamin biosynthesis; cob(II)yrinate a,c-diamide from sirohydrochlorin (anaerobic route): step 8/10. Functionally, catalyzes the methylation of C-15 in cobalt-precorrin-6B followed by the decarboxylation of C-12 to form cobalt-precorrin-7. The polypeptide is Probable cobalt-precorrin-6B C(15)-methyltransferase (decarboxylating) (Sulfolobus acidocaldarius (strain ATCC 33909 / DSM 639 / JCM 8929 / NBRC 15157 / NCIMB 11770)).